Reading from the N-terminus, the 84-residue chain is MNKTQGNLQDLFLNVLRRDNTPVTIYLVNGFQLKGVVRGFDNFTVVLDADGKQQMIYKHAISTIMPFRPVNLMAESRAQAEAKQ.

The Sm domain occupies 10–70 (DLFLNVLRRD…ISTIMPFRPV (61 aa)).

It belongs to the Hfq family. Homohexamer.

RNA chaperone that binds small regulatory RNA (sRNAs) and mRNAs to facilitate mRNA translational regulation in response to envelope stress, environmental stress and changes in metabolite concentrations. Also binds with high specificity to tRNAs. The polypeptide is RNA-binding protein Hfq (Moorella thermoacetica (strain ATCC 39073 / JCM 9320)).